The sequence spans 158 residues: MQGRLSAWLVKHELVHRSLGFDYQGIEILQIKPEDWDSIAVISYVYGYNYLRSQCAYDVAPGGFLASVYHLTRIQYGVDQPEEVCIKVFAPRRNPKIPSVFWIWRSADFQERESYDMLGISYENHPRLKRILMPESWIGWPLRKDYIAPNFYEIQDAH.

This sequence belongs to the complex I 30 kDa subunit family. In terms of assembly, NDH is composed of at least 16 different subunits, 5 of which are encoded in the nucleus.

It is found in the plastid. The protein localises to the chloroplast thylakoid membrane. The catalysed reaction is a plastoquinone + NADH + (n+1) H(+)(in) = a plastoquinol + NAD(+) + n H(+)(out). It catalyses the reaction a plastoquinone + NADPH + (n+1) H(+)(in) = a plastoquinol + NADP(+) + n H(+)(out). Functionally, NDH shuttles electrons from NAD(P)H:plastoquinone, via FMN and iron-sulfur (Fe-S) centers, to quinones in the photosynthetic chain and possibly in a chloroplast respiratory chain. The immediate electron acceptor for the enzyme in this species is believed to be plastoquinone. Couples the redox reaction to proton translocation, and thus conserves the redox energy in a proton gradient. The protein is NAD(P)H-quinone oxidoreductase subunit J, chloroplastic of Acorus calamus var. americanus (American sweet flag).